Here is a 226-residue protein sequence, read N- to C-terminus: Octanoyltransferase (226 aa).

Residues 31-226 enclose the BPL/LPL catalytic domain; that stretch reads PETPDALWIC…SQKLGTYLAP (196 aa). Residues 70 to 77, 159 to 161, and 172 to 174 each bind substrate; these read RGGQVTFH, ALG, and GVA. The Acyl-thioester intermediate role is filled by Cys190.

This sequence belongs to the LipB family.

The protein resides in the cytoplasm. The catalysed reaction is octanoyl-[ACP] + L-lysyl-[protein] = N(6)-octanoyl-L-lysyl-[protein] + holo-[ACP] + H(+). Its pathway is protein modification; protein lipoylation via endogenous pathway; protein N(6)-(lipoyl)lysine from octanoyl-[acyl-carrier-protein]: step 1/2. Its function is as follows. Catalyzes the transfer of endogenously produced octanoic acid from octanoyl-acyl-carrier-protein onto the lipoyl domains of lipoate-dependent enzymes. Lipoyl-ACP can also act as a substrate although octanoyl-ACP is likely to be the physiological substrate. The sequence is that of Octanoyltransferase from Variovorax paradoxus (strain S110).